The sequence spans 140 residues: Probable glycine cleavage system H protein (140 aa).

The region spanning 22-114 (RAIIGITSYA…YEEGWIVVLE (93 aa)) is the Lipoyl-binding domain. The residue at position 63 (Lys63) is an N6-lipoyllysine.

This sequence belongs to the GcvH family. In terms of assembly, the glycine cleavage system is composed of four proteins: P, T, L and H. (R)-lipoate serves as cofactor.

Its function is as follows. The glycine cleavage system catalyzes the degradation of glycine. The H protein shuttles the methylamine group of glycine from the P protein to the T protein. This chain is Probable glycine cleavage system H protein, found in Korarchaeum cryptofilum (strain OPF8).